The primary structure comprises 386 residues: Heavy metal-associated isoprenylated plant protein 5 (386 aa).

Residues 1–16 (MGEVQEGPKVEQEKKP) show a composition bias toward basic and acidic residues. Residues 1–40 (MGEVQEGPKVEQEKKPAATVVPVETTDGKPKSGGGDSAAA) form a disordered region. The HMA 1 domain occupies 49–112 (VSAFVYKVDM…KLEEKTKRKV (64 aa)). Residues Cys-60 and Cys-63 each contribute to the a metal cation site. The tract at residues 129–153 (VGEKKADGGDKEAAPPAPAPAAPKE) is disordered. A compositionally biased stretch (basic and acidic residues) spans 130 to 141 (GEKKADGGDKEA). Residues 153 to 220 (ESVVPLKIRL…KLKRTVEPLV (68 aa)) enclose the HMA 2 domain. A metal cation is bound by residues Cys-164 and Cys-167. Composition is skewed to basic and acidic residues over residues 223–245 (KKDD…KKEA) and 252–297 (EAKK…KKDG). The disordered stretch occupies residues 223–301 (KKDDGAAENK…EKKKDGGGVP (79 aa)). A Cysteine methyl ester modification is found at Cys-383. A lipid anchor (S-farnesyl cysteine) is attached at Cys-383. Positions 384–386 (SVM) are cleaved as a propeptide — removed in mature form.

This sequence belongs to the HIPP family. In terms of processing, efficiently farnesylated in vitro.

Functionally, heavy-metal-binding protein. Involved in disease resistance. The protein is Heavy metal-associated isoprenylated plant protein 5 of Arabidopsis thaliana (Mouse-ear cress).